The primary structure comprises 345 residues: Class I histocompatibility antigen, F10 alpha chain (345 aa).

Residues 1-22 (MGPCGALGLGLLLAAVCGAAAP) form the signal peptide. The interval 23-110 (ELHTLRYIQT…ILQRRYNQTG (88 aa)) is alpha-1. The Extracellular portion of the chain corresponds to 23–301 (ELHTLRYIQT…WEPPQPNLVP (279 aa)). Residues N59 and N107 are each glycosylated (N-linked (GlcNAc...) asparagine). An alpha-2 region spans residues 111–201 (GSHTVQWMYG…EYGKAELGRR (91 aa)). 2 disulfides stabilise this stretch: C121–C183 and C221–C277. The tract at residues 202–292 (ERPEVRVWGK…SLPQPGLYSW (91 aa)) is alpha-3. An Ig-like C1-type domain is found at 204–293 (PEVRVWGKEA…LPQPGLYSWE (90 aa)). The tract at residues 293–301 (EPPQPNLVP) is connecting peptide. Residues 302–324 (IVAGVAVAIVAIAIMVGVGFIIY) traverse the membrane as a helical segment. The Cytoplasmic portion of the chain corresponds to 325–345 (RRHAGKKGKGYNIAPGSNPAI).

It belongs to the MHC class I family. In terms of assembly, heterodimer of an alpha chain and a beta chain (beta-2-microglobulin).

The protein localises to the membrane. Its function is as follows. Involved in the presentation of foreign antigens to the immune system. The sequence is that of Class I histocompatibility antigen, F10 alpha chain from Gallus gallus (Chicken).